A 543-amino-acid chain; its full sequence is Chaperonin GroEL (543 aa).

ATP-binding positions include 29–32, 86–90, Gly-413, 477–479, and Asp-493; these read TLGP, DGTTT, and DAL. The disordered stretch occupies residues 524–543; the sequence is EKDKPEMPGGAPGMGMGGMY. Positions 533-543 are enriched in gly residues; the sequence is GAPGMGMGGMY.

Belongs to the chaperonin (HSP60) family. In terms of assembly, forms a cylinder of 14 subunits composed of two heptameric rings stacked back-to-back. Interacts with the co-chaperonin GroES.

It is found in the cytoplasm. It catalyses the reaction ATP + H2O + a folded polypeptide = ADP + phosphate + an unfolded polypeptide.. Its function is as follows. Together with its co-chaperonin GroES, plays an essential role in assisting protein folding. The GroEL-GroES system forms a nano-cage that allows encapsulation of the non-native substrate proteins and provides a physical environment optimized to promote and accelerate protein folding. This Clostridium acetobutylicum (strain ATCC 824 / DSM 792 / JCM 1419 / IAM 19013 / LMG 5710 / NBRC 13948 / NRRL B-527 / VKM B-1787 / 2291 / W) protein is Chaperonin GroEL.